Here is a 109-residue protein sequence, read N- to C-terminus: Spermidine export protein MdtI (109 aa).

4 helical membrane-spanning segments follow: residues tryptophan 6 to leucine 26, isoleucine 36 to valine 56, alanine 64 to phenylalanine 84, and leucine 88 to leucine 108.

The protein belongs to the drug/metabolite transporter (DMT) superfamily. Small multidrug resistance (SMR) (TC 2.A.7.1) family. MdtI subfamily. As to quaternary structure, forms a complex with MdtJ.

The protein localises to the cell inner membrane. In terms of biological role, catalyzes the excretion of spermidine. This is Spermidine export protein MdtI from Klebsiella pneumoniae subsp. pneumoniae (strain ATCC 700721 / MGH 78578).